Consider the following 831-residue polypeptide: Histone acetyltransferase SAS3 (831 aa).

Positions 267–573 constitute an MYST-type HAT domain; that stretch reads VWFSQIEYIV…VKYDKLLWEP (307 aa). The C2HC MYST-type zinc finger occupies 300–325; it reads VFICEFCLKYMTSRYTFYRHQLKCLT. Lys-367 bears the N6-acetyllysine; by autocatalysis mark. Residues 419-421 and 426-432 each bind acetyl-CoA; these read ILT and QRKGYGQ. Glu-452 functions as the Proton donor/acceptor in the catalytic mechanism. Ser-456 is an acetyl-CoA binding site. Disordered regions lie at residues 614 to 639 and 719 to 813; these read ENYNNSRAHNKRRRRRRRSSEHKTSK and PLGN…SHIR. The segment covering 621-633 has biased composition (basic residues); the sequence is AHNKRRRRRRRSS. Acidic residues-rich tracts occupy residues 736–746 and 755–794; these read EQDEVENDVDT and KEDEDEDEDFTLDDDIEDEQISEENDEEEDTYEEDSDDDE. Residues 795–812 are compositionally biased toward basic and acidic residues; that stretch reads DGKRKGQEQDENDIESHI.

This sequence belongs to the MYST (SAS/MOZ) family. As to quaternary structure, component of the NuA3 histone acetyltransferase (HAT) complex. The NuA3 HAT complex has 2 functionally distinct forms that participate in transcription. The NuA3a HAT complex is composed of at least NTO1, SAS3, TAF14, YNG1 and EAF6. The NuA3b HAT complex contains an additional subunit, PDP3. SAS3 interacts with CDC68/SPT16. In terms of processing, autoacetylation at Lys-367 is required for proper function.

It localises to the nucleus. It catalyses the reaction L-lysyl-[protein] + acetyl-CoA = N(6)-acetyl-L-lysyl-[protein] + CoA + H(+). Catalytic component of the NuA3 histone acetyltransferase complex, that acetylates H3K14. The NuA3 HAT complex has 2 functionally distinct forms. NuA3a binds H3K4me3, through the PHD finger of YNG1, and acetylates H3K14 at the promoter region of actively transcribed genes to promote transcription initiation. NuA3b binds H3K36me3 at the coding regions of actively transcribed genes, through the PWWP domain of PDP3, and coordinates transcription elongation. In vitro, SAS3 acetylates free histones H3 and H4. It is involved in silencing the HMR locus. In Saccharomyces cerevisiae (strain ATCC 204508 / S288c) (Baker's yeast), this protein is Histone acetyltransferase SAS3.